We begin with the raw amino-acid sequence, 893 residues long: MMMNSMIRQGWQQVLRRFSIPTSGDRLIVSNSTDQPIGLFGAFDTSLQTLSQVTNDPEVLKQKSNIPTHLDVASVLEASPRSFPWVFLTNSFCTFGGSIHAQNLQAFATAEFKSGFCYMNLLIPLSFDIIDAHADSFRGFVEQLPDTLGAYPSLSMVLNVMLHAATRFPEIVASPIPTIAFDAESLQFHVTDKRGVPGMWNILKACRVYELLSLAADGIGCEYMLYPVGAAPQYSFWKKSMDHFTSDRFVEFLAMQDLLASALEQDYATHDARDALLSALQNAGYTNVVARERRFPNGHDPSIVWLNLSEAPISEKLTELKRYLLVGHRSDDTADITHNVHQHVFEVLKTMSVQFSKTTNAYNRARFEVNHKVIWNAEYGRGPQQNAELEALVLFLNRQSLEIENILHRTTSPVVVTSWKPDVPPAAPEIKEEEPTHAIATPITEAPSHVTPVEVVNLPPTRSYWAETLVGILTAILGTVFAFLTRALIRAKRLRRKSTFPWVTLNSGDDDDDQSGGGGGGPQTPGGQPPVPHTRGTHQSRFSVQDIASDTSLLSVDLDEDTLSQYDETFQKIRRALFETSFADILQNSARWISTLEAMALADGNAPYTLLAQYLNGIEEAYTNFRNTGHISRATLSGFFALEDNLRAAGIAFGTTTPTQTIQNQFADSPARRWKTRFEQIACELGDASIKSLADLADIIDTERERGDLTQFDVLAASSISSLCRAVRIISDTTDPNAQLALVENATAMQNNINAILGTNVSIPFLSATRRLLITRRVQEAGAESRSGATPETVQQLADAELAKIVSEANMYNEMAASQRDIANATREATIREHVLSPVNALANVGMAAAFFRSGGLRSRAFNPAMPTMPGGPAAAGRPMFQAFRGRGHRLNR.

A Peptidase C6 domain is found at 109–229 (TAEFKSGFCY…GCEYMLYPVG (121 aa)). Residues Cys-117 and His-189 each act as for helper component proteinase activity in the active site. Positions 502-539 (WVTLNSGDDDDDQSGGGGGGPQTPGGQPPVPHTRGTHQ) are disordered. The segment covering 515 to 524 (SGGGGGGPQT) has biased composition (gly residues).

This sequence belongs to the bymoviruses polyprotein 2 family. Post-translationally, the viral RNA2 of bymoviruses is expressed as a single polyprotein which undergoes post-translational proteolytic processing resulting in the production of at least two individual proteins. The HC-pro cleaves its C-terminus autocatalytically (Potential).

It carries out the reaction Hydrolyzes a Gly-|-Gly bond at its own C-terminus, commonly in the sequence -Tyr-Xaa-Val-Gly-|-Gly, in the processing of the potyviral polyprotein.. This is Genome polyprotein 2 (RNA2) from Barley mild mosaic virus (strain ASL) (BaMMV).